Here is a 141-residue protein sequence, read N- to C-terminus: Hemoglobin subunit alpha-A (141 aa).

One can recognise a Globin domain in the interval 1 to 141 (VLNAGDKANV…VGTVLTSKYR (141 aa)). His58 provides a ligand contact to O2. His87 serves as a coordination point for heme b.

It belongs to the globin family. As to quaternary structure, heterotetramer of two alpha chains and two beta chains. As to expression, red blood cells.

Functionally, involved in oxygen transport from the lung to the various peripheral tissues. The polypeptide is Hemoglobin subunit alpha-A (HBAA) (Chrysemys picta bellii (Western painted turtle)).